The chain runs to 166 residues: PTS system glucose-specific EIIA component (166 aa).

The 105-residue stretch at 34–138 folds into the PTS EIIA type-1 domain; it reads DPVFAQKMMG…SIISPIIITN (105 aa). Positions 71 and 86 each coordinate Zn(2+). The active-site Tele-phosphohistidine intermediate; for EIIA activity is the histidine 86. The residue at position 86 (histidine 86) is a Phosphohistidine; by HPr.

As to quaternary structure, heterodimer with glycerol kinase (glpk). Zn(2+) serves as cofactor.

It localises to the cytoplasm. Its function is as follows. The phosphoenolpyruvate-dependent sugar phosphotransferase system (sugar PTS), a major carbohydrate active transport system, catalyzes the phosphorylation of incoming sugar substrates concomitantly with their translocation across the cell membrane. The enzyme II complex composed of PtsG and Crr is involved in glucose transport. This Staphylococcus epidermidis (strain ATCC 35984 / DSM 28319 / BCRC 17069 / CCUG 31568 / BM 3577 / RP62A) protein is PTS system glucose-specific EIIA component (crr).